A 535-amino-acid chain; its full sequence is MTKYIFVTGGVVSSLGKGITAASLGRLLKNRGLNVTIQKFDPYINVDPGTMSPYQHGEVFVTDDGAETDLDLGHYERFIDINLNKYSNVTTGKIYSSVLQKERRGEYLGGTVQVIPHITNEIKERVYRSGRETNADVVITEIGGTVGDIESLPFLEAIRQIKSDIGRDNVMYIHCTLIPYLKAAGEMKTKPTQHSVKELRSLGIQPNIIVVRTEMPVSQDMKDKLALFCDIDTKAVIEARDADTLYAVPLSLQEQNMDQIVCDHLKLDNPAADMTEWTALVEKVRNLSKKTKIALVGKYVELQDAYISVVEALRHAGYSFDTDVEVKWVNAEHVTAENVQELVGDTDGILVPGGFGDRGVEGKIVAIQYARENKVPFLGICLGMQLASIEFARNVLGLEGANSSEINPDTPYAIIDLLPEQKDVEDLGGTLRLGLYPCKLAEETNAYNAYNEPVVYERHRHRYEFNNQFRPDMEKAGFVFSGTSPDGRLVEIVELKDHPWFVAAQFHPELVSRPNRPQPLFHDFVRASITNKESK.

Residues 1–267 (MTKYIFVTGG…DQIVCDHLKL (267 aa)) form an amidoligase domain region. S13 is a binding site for CTP. Position 13 (S13) interacts with UTP. 14–19 (SLGKGI) provides a ligand contact to ATP. Y54 provides a ligand contact to L-glutamine. D71 is an ATP binding site. Mg(2+) is bound by residues D71 and E141. CTP contacts are provided by residues 148–150 (DIE), 188–193 (KTKPTQ), and K224. UTP contacts are provided by residues 188-193 (KTKPTQ) and K224. An ATP-binding site is contributed by 240 to 242 (RDA). The Glutamine amidotransferase type-1 domain occupies 292–534 (KIALVGKYVE…VRASITNKES (243 aa)). Position 354 (G354) interacts with L-glutamine. C381 (nucleophile; for glutamine hydrolysis) is an active-site residue. L-glutamine contacts are provided by residues 382-385 (LGMQ), E405, and R462. Active-site residues include H507 and E509.

The protein belongs to the CTP synthase family. Homotetramer.

It carries out the reaction UTP + L-glutamine + ATP + H2O = CTP + L-glutamate + ADP + phosphate + 2 H(+). The enzyme catalyses L-glutamine + H2O = L-glutamate + NH4(+). It catalyses the reaction UTP + NH4(+) + ATP = CTP + ADP + phosphate + 2 H(+). It participates in pyrimidine metabolism; CTP biosynthesis via de novo pathway; CTP from UDP: step 2/2. With respect to regulation, allosterically activated by GTP, when glutamine is the substrate; GTP has no effect on the reaction when ammonia is the substrate. The allosteric effector GTP functions by stabilizing the protein conformation that binds the tetrahedral intermediate(s) formed during glutamine hydrolysis. Inhibited by the product CTP, via allosteric rather than competitive inhibition. Its function is as follows. Catalyzes the ATP-dependent amination of UTP to CTP with either L-glutamine or ammonia as the source of nitrogen. Regulates intracellular CTP levels through interactions with the four ribonucleotide triphosphates. In Bacillus cereus (strain ATCC 10987 / NRS 248), this protein is CTP synthase.